The primary structure comprises 159 residues: Cytochrome c-type biogenesis protein CcmE (159 aa).

The Cytoplasmic portion of the chain corresponds to 1–8; that stretch reads MNIRRKNR. The helical; Signal-anchor for type II membrane protein transmembrane segment at 9 to 29 threads the bilayer; it reads LWIACAVLAGLALTITLVLYA. The Periplasmic portion of the chain corresponds to 30–159; it reads LRSNIDLFYT…PESVYKDKAS (130 aa). The heme site is built by H130 and Y134. The disordered stretch occupies residues 130-159; sequence HDENYTPPEVEKAMQENHRRPESVYKDKAS.

This sequence belongs to the CcmE/CycJ family.

It localises to the cell inner membrane. Functionally, heme chaperone required for the biogenesis of c-type cytochromes. Transiently binds heme delivered by CcmC and transfers the heme to apo-cytochromes in a process facilitated by CcmF and CcmH. This chain is Cytochrome c-type biogenesis protein CcmE, found in Citrobacter koseri (strain ATCC BAA-895 / CDC 4225-83 / SGSC4696).